Reading from the N-terminus, the 324-residue chain is tRNA-modifying protein YgfZ (324 aa).

Tryptophan 186 contributes to the folate binding site.

Belongs to the tRNA-modifying YgfZ family.

The protein localises to the cytoplasm. Folate-binding protein involved in regulating the level of ATP-DnaA and in the modification of some tRNAs. It is probably a key factor in regulatory networks that act via tRNA modification, such as initiation of chromosomal replication. In Colwellia psychrerythraea (strain 34H / ATCC BAA-681) (Vibrio psychroerythus), this protein is tRNA-modifying protein YgfZ.